Consider the following 218-residue polypeptide: Small ribosomal subunit protein uS3c (218 aa).

Residues 39–109 enclose the KH type-2 domain; it reads IRNYVKVNLS…QIRINVTELK (71 aa).

It belongs to the universal ribosomal protein uS3 family. As to quaternary structure, part of the 30S ribosomal subunit.

Its subcellular location is the plastid. It localises to the chloroplast. The polypeptide is Small ribosomal subunit protein uS3c (rps3) (Rhodomonas salina (Cryptomonas salina)).